Reading from the N-terminus, the 355-residue chain is C-C chemokine receptor type 3 (355 aa).

Over 1–34 (MTTSLDTVETFGPTSYDDDMGLLCEKADVGALIA) the chain is Extracellular. The helical transmembrane segment at 35 to 62 (QFVPPLYSLVFMVGLLGNVVVVMILIKY) threads the bilayer. At 63-72 (RRLRIMTNIY) the chain is on the cytoplasmic side. Residues 73-93 (LLNLAISDLLFLFTLPFWIHY) traverse the membrane as a helical segment. Residues 94-107 (VRERNWVFSHGMCK) lie on the Extracellular side of the membrane. Cys-106 and Cys-183 are joined by a disulfide. The helical transmembrane segment at 108–129 (VLSGFYHTGLYSEIFFIILLTI) threads the bilayer. Over 130-146 (DRYLAIVHAVFALRART) the chain is Cytoplasmic. Residues 147–171 (VTFGVITSIVTWGLAVLAALPEFIF) form a helical membrane-spanning segment. Topologically, residues 172-203 (YGTEKLFPKTLCSAIYPQDTVYSWRHFHTLKM) are extracellular. A helical transmembrane segment spans residues 204 to 223 (TILCLALPLLVMAICYTGII). Over 224 to 239 (KTLLRCPSKKKYKAIR) the chain is Cytoplasmic. The chain crosses the membrane as a helical span at residues 240 to 264 (LIFVIMAVFFIFWTPYNVAILISTY). At 265 to 281 (QSVLFGLDCERSKHLDL) the chain is on the extracellular side. A helical membrane pass occupies residues 282–305 (FVLATEVIAYSHCCVNPVIYAFVG). The Cytoplasmic segment spans residues 306 to 355 (ERFRKYLRHFFHRHVLMHLGKYIPFLPSEKLERTSSVSPSTAEPELSIVF).

This sequence belongs to the G-protein coupled receptor 1 family.

It localises to the cell membrane. Receptor for C-C type chemokine. Binds and responds to a variety of chemokines, including CCL11, CCL26, CCL7, CCL13, RANTES(CCL5) and CCL15. Subsequently transduces a signal by increasing the intracellular calcium ions level. In addition acts as a possible functional receptor for NARS1. The polypeptide is C-C chemokine receptor type 3 (CCR3) (Macaca mulatta (Rhesus macaque)).